A 293-amino-acid polypeptide reads, in one-letter code: tRNA(His) guanylyltransferase (293 aa).

3 residues coordinate Mg(2+): Asp-29, Gly-30, and Asp-76. GTP-binding positions include 29 to 34 (DGRGFT) and 75 to 76 (SD). Residues 226–252 (KKVSEEEAEEMSSSAVPEVKSKSQVEK) form a disordered region.

This sequence belongs to the tRNA(His) guanylyltransferase family. Mg(2+) serves as cofactor.

The catalysed reaction is a 5'-end ribonucleotide-tRNA(His) + GTP + ATP + H2O = a 5'-end phospho-guanosine-ribonucleotide-tRNA(His) + AMP + 2 diphosphate + H(+). Its function is as follows. Adds a GMP to the 5'-end of tRNA(His) after transcription and RNase P cleavage. This is tRNA(His) guanylyltransferase (rgt-1) from Neurospora crassa (strain ATCC 24698 / 74-OR23-1A / CBS 708.71 / DSM 1257 / FGSC 987).